Here is a 266-residue protein sequence, read N- to C-terminus: Cytochrome c oxidase subunit 2 (266 aa).

Over 1–43 (MTITNYINNQFTFLDMAEPWQLGFQDPATPVMEGIINFHHDLM) the chain is Mitochondrial intermembrane. The chain crosses the membrane as a helical span at residues 44-64 (FFLISIVVFVCWMLFRVITLF). At 65–82 (DEKKNKIPATVVHGATIE) the chain is on the mitochondrial matrix side. Residues 83–103 (IIWTSIPALILLTVAVPSFAL) traverse the membrane as a helical segment. Topologically, residues 104–266 (LYSMDEVIDP…NVXLIKFYGI (163 aa)) are mitochondrial intermembrane. The Cu cation site is built by H186, C221, E223, C225, H229, and M232. Residue E223 coordinates Mg(2+).

This sequence belongs to the cytochrome c oxidase subunit 2 family. Component of the cytochrome c oxidase (complex IV, CIV), a multisubunit enzyme composed of a catalytic core of 3 subunits and several supernumerary subunits. The complex exists as a monomer or a dimer and forms supercomplexes (SCs) in the inner mitochondrial membrane with ubiquinol-cytochrome c oxidoreductase (cytochrome b-c1 complex, complex III, CIII). Requires Cu cation as cofactor.

The protein localises to the mitochondrion inner membrane. The enzyme catalyses 4 Fe(II)-[cytochrome c] + O2 + 8 H(+)(in) = 4 Fe(III)-[cytochrome c] + 2 H2O + 4 H(+)(out). In terms of biological role, component of the cytochrome c oxidase, the last enzyme in the mitochondrial electron transport chain which drives oxidative phosphorylation. The respiratory chain contains 3 multisubunit complexes succinate dehydrogenase (complex II, CII), ubiquinol-cytochrome c oxidoreductase (cytochrome b-c1 complex, complex III, CIII) and cytochrome c oxidase (complex IV, CIV), that cooperate to transfer electrons derived from NADH and succinate to molecular oxygen, creating an electrochemical gradient over the inner membrane that drives transmembrane transport and the ATP synthase. Cytochrome c oxidase is the component of the respiratory chain that catalyzes the reduction of oxygen to water. Electrons originating from reduced cytochrome c in the intermembrane space (IMS) are transferred via the dinuclear copper A center (CU(A)) of subunit 2 and heme A of subunit 1 to the active site in subunit 1, a binuclear center (BNC) formed by heme A3 and copper B (CU(B)). The BNC reduces molecular oxygen to 2 water molecules using 4 electrons from cytochrome c in the IMS and 4 protons from the mitochondrial matrix. The polypeptide is Cytochrome c oxidase subunit 2 (COX2) (Phytophthora megasperma (Potato pink rot fungus)).